Reading from the N-terminus, the 559-residue chain is N-acetylglucosamine-6-sulfatase (559 aa).

Residues 1 to 26 (MRFLSLAPDRPRRGGPRHLPSGSPAP) form a disordered region. Positions 1-47 (MRFLSLAPDRPRRGGPRHLPSGSPAPPPPPPLLLLLLLGGCLGVSGA) are cleaved as a signal peptide. Ca(2+) contacts are provided by D62, D63, and C98. Residue C98 is the Nucleophile of the active site. 3-oxoalanine (Cys) is present on C98. Residues N118, N124, N190, N205, N217, N286, and N324 are each glycosylated (N-linked (GlcNAc...) asparagine). Residues D333 and N334 each contribute to the Ca(2+) site. N-linked (GlcNAc...) asparagine glycans are attached at residues N369, N394, N412, N429, N456, and N487. S548 bears the Phosphoserine mark.

The protein belongs to the sulfatase family. Ca(2+) serves as cofactor. Processed by internal peptidase. Post-translationally, the conversion to 3-oxoalanine (also known as C-formylglycine, FGly), of a serine or cysteine residue in prokaryotes and of a cysteine residue in eukaryotes, is critical for catalytic activity.

The protein localises to the lysosome. The catalysed reaction is Hydrolysis of the 6-sulfate groups of the N-acetyl-D-glucosamine 6-sulfate units of heparan sulfate and keratan sulfate.. Its function is as follows. Hydrolyzes 6-sulfate groups in N-acetyl-d-glucosaminide units of heparin sulfate and keratan sulfate. The sequence is that of N-acetylglucosamine-6-sulfatase (GNS) from Capra hircus (Goat).